We begin with the raw amino-acid sequence, 110 residues long: UPF0122 protein SMU_1061 (110 aa).

This sequence belongs to the UPF0122 family.

Its function is as follows. Might take part in the signal recognition particle (SRP) pathway. This is inferred from the conservation of its genetic proximity to ftsY/ffh. May be a regulatory protein. The protein is UPF0122 protein SMU_1061 (ylxM) of Streptococcus mutans serotype c (strain ATCC 700610 / UA159).